The sequence spans 470 residues: 6-phospho-beta-galactosidase (470 aa).

5 residues coordinate D-galactose 6-phosphate: glutamine 19, histidine 116, asparagine 159, glutamate 160, and asparagine 297. The Proton donor role is filled by glutamate 160. Catalysis depends on glutamate 375, which acts as the Nucleophile. Serine 430, tryptophan 431, lysine 437, and tyrosine 439 together coordinate D-galactose 6-phosphate.

It belongs to the glycosyl hydrolase 1 family.

The enzyme catalyses a 6-phospho-beta-D-galactoside + H2O = D-galactose 6-phosphate + an alcohol. Its pathway is carbohydrate metabolism; lactose degradation; D-galactose 6-phosphate and beta-D-glucose from lactose 6-phosphate: step 1/1. The sequence is that of 6-phospho-beta-galactosidase from Staphylococcus epidermidis (strain ATCC 35984 / DSM 28319 / BCRC 17069 / CCUG 31568 / BM 3577 / RP62A).